A 133-amino-acid chain; its full sequence is Large ribosomal subunit protein uL14 (133 aa).

The protein belongs to the universal ribosomal protein uL14 family. In terms of assembly, part of the 50S ribosomal subunit. Forms a cluster with proteins L3 and L19. In the 70S ribosome, L14 and L19 interact and together make contacts with the 16S rRNA in bridges B5 and B8.

Binds to 23S rRNA. Forms part of two intersubunit bridges in the 70S ribosome. This is Large ribosomal subunit protein uL14 from Gloeobacter violaceus (strain ATCC 29082 / PCC 7421).